We begin with the raw amino-acid sequence, 206 residues long: Dephospho-CoA kinase (206 aa).

In terms of domain architecture, DPCK spans 4-200 (IVALTGGIGS…AYYLQLASQF (197 aa)). 12 to 17 (GSGKST) lines the ATP pocket.

This sequence belongs to the CoaE family.

It localises to the cytoplasm. It carries out the reaction 3'-dephospho-CoA + ATP = ADP + CoA + H(+). The protein operates within cofactor biosynthesis; coenzyme A biosynthesis; CoA from (R)-pantothenate: step 5/5. In terms of biological role, catalyzes the phosphorylation of the 3'-hydroxyl group of dephosphocoenzyme A to form coenzyme A. The sequence is that of Dephospho-CoA kinase from Escherichia coli O6:H1 (strain CFT073 / ATCC 700928 / UPEC).